Here is a 262-residue protein sequence, read N- to C-terminus: DNA repair protein RecO (262 aa).

The protein belongs to the RecO family.

Involved in DNA repair and RecF pathway recombination. The sequence is that of DNA repair protein RecO from Acidovorax ebreus (strain TPSY) (Diaphorobacter sp. (strain TPSY)).